The chain runs to 81 residues: Small ribosomal subunit protein eS21 (81 aa).

The protein belongs to the eukaryotic ribosomal protein eS21 family. Component of the 40S small ribosomal subunit.

Its subcellular location is the cytoplasm. The protein resides in the cytosol. The protein localises to the rough endoplasmic reticulum. Functionally, component of the small ribosomal subunit. The ribosome is a large ribonucleoprotein complex responsible for the synthesis of proteins in the cell. The chain is Small ribosomal subunit protein eS21 (rps21) from Danio rerio (Zebrafish).